The primary structure comprises 362 residues: D-alanine--D-alanine ligase (362 aa).

The 205-residue stretch at 153–357 (KKIAREAGIP…YADLLTTLVS (205 aa)) folds into the ATP-grasp domain. 180-235 (RELLGLPVFVKPARGGSSIGISKVDSWRDLPAAIEEAASHDPKVIIEAMITGPEVE) serves as a coordination point for ATP. Mg(2+) is bound by residues Asp-312, Glu-324, and Asn-326.

It belongs to the D-alanine--D-alanine ligase family. Requires Mg(2+) as cofactor. Mn(2+) serves as cofactor.

The protein resides in the cytoplasm. It catalyses the reaction 2 D-alanine + ATP = D-alanyl-D-alanine + ADP + phosphate + H(+). It functions in the pathway cell wall biogenesis; peptidoglycan biosynthesis. Its function is as follows. Cell wall formation. The protein is D-alanine--D-alanine ligase of Corynebacterium urealyticum (strain ATCC 43042 / DSM 7109).